The chain runs to 385 residues: Succinate--CoA ligase [ADP-forming] subunit beta (385 aa).

An ATP-grasp domain is found at 9-244; it reads KEILRKYGVP…QDEEDPLETR (236 aa). ATP-binding positions include K46, 53–55, E99, C102, and E107; that span reads GRG. 2 residues coordinate Mg(2+): N199 and D213. Residues N264 and 321–323 contribute to the substrate site; that span reads GIM.

The protein belongs to the succinate/malate CoA ligase beta subunit family. As to quaternary structure, heterotetramer of two alpha and two beta subunits. Requires Mg(2+) as cofactor.

The enzyme catalyses succinate + ATP + CoA = succinyl-CoA + ADP + phosphate. It carries out the reaction GTP + succinate + CoA = succinyl-CoA + GDP + phosphate. It functions in the pathway carbohydrate metabolism; tricarboxylic acid cycle; succinate from succinyl-CoA (ligase route): step 1/1. Succinyl-CoA synthetase functions in the citric acid cycle (TCA), coupling the hydrolysis of succinyl-CoA to the synthesis of either ATP or GTP and thus represents the only step of substrate-level phosphorylation in the TCA. The beta subunit provides nucleotide specificity of the enzyme and binds the substrate succinate, while the binding sites for coenzyme A and phosphate are found in the alpha subunit. The sequence is that of Succinate--CoA ligase [ADP-forming] subunit beta from Rickettsia bellii (strain RML369-C).